Reading from the N-terminus, the 303-residue chain is Recombination-associated protein RdgC (303 aa).

It belongs to the RdgC family.

Its subcellular location is the cytoplasm. It is found in the nucleoid. May be involved in recombination. This chain is Recombination-associated protein RdgC, found in Aeromonas hydrophila subsp. hydrophila (strain ATCC 7966 / DSM 30187 / BCRC 13018 / CCUG 14551 / JCM 1027 / KCTC 2358 / NCIMB 9240 / NCTC 8049).